A 967-amino-acid polypeptide reads, in one-letter code: Probable helicase DDB_G0274399 (967 aa).

Residues 161 to 192 form a disordered region; that stretch reads EMTDDEDTAPTSAATHVGAPTKSTTTTTTTTT. 357–364 serves as a coordination point for ATP; sequence GPPGTGKT. Disordered stretches follow at residues 529 to 553 and 892 to 967; these read SAIP…QDTS and QKQK…RTRR. Positions 890 to 949 form a coiled coil; the sequence is NLQKQKDIEKRKKQHKRQKQKSKENDKKKQLKKRKELNNNDNNNNNKESSNKEVQEITNA. Over residues 900-909 the composition is skewed to basic residues; it reads RKKQHKRQKQ. Residues 928–937 show a composition bias toward low complexity; sequence NNDNNNNNKE.

Belongs to the DNA2/NAM7 helicase family.

The protein resides in the nucleus. This chain is Probable helicase DDB_G0274399, found in Dictyostelium discoideum (Social amoeba).